The chain runs to 399 residues: Elongation factor Tu (399 aa).

The tr-type G domain maps to 10–204; sequence KPHVNIGTIG…AVDASIPEPE (195 aa). The G1 stretch occupies residues 19-26; sequence GHVDHGKT. GTP is bound at residue 19 to 26; that stretch reads GHVDHGKT. Thr26 provides a ligand contact to Mg(2+). The interval 60 to 64 is G2; that stretch reads GITIN. The G3 stretch occupies residues 81–84; sequence DCPG. GTP is bound by residues 81–85 and 136–139; these read DCPGH and NKCD. A G4 region spans residues 136 to 139; it reads NKCD. Positions 174 to 176 are G5; the sequence is SGL.

Belongs to the TRAFAC class translation factor GTPase superfamily. Classic translation factor GTPase family. EF-Tu/EF-1A subfamily. As to quaternary structure, monomer.

The protein localises to the cytoplasm. The catalysed reaction is GTP + H2O = GDP + phosphate + H(+). Functionally, GTP hydrolase that promotes the GTP-dependent binding of aminoacyl-tRNA to the A-site of ribosomes during protein biosynthesis. In Prochlorococcus marinus (strain MIT 9312), this protein is Elongation factor Tu.